We begin with the raw amino-acid sequence, 269 residues long: tRNA uridine(34) hydroxylase (269 aa).

In terms of domain architecture, Rhodanese spans 121–214 (SQPDVLVIDT…YLERTHNKNG (94 aa)). Cys-174 serves as the catalytic Cysteine persulfide intermediate.

This sequence belongs to the TrhO family.

The catalysed reaction is uridine(34) in tRNA + AH2 + O2 = 5-hydroxyuridine(34) in tRNA + A + H2O. Functionally, catalyzes oxygen-dependent 5-hydroxyuridine (ho5U) modification at position 34 in tRNAs. This is tRNA uridine(34) hydroxylase from Wolbachia sp. subsp. Brugia malayi (strain TRS).